Here is a 1100-residue protein sequence, read N- to C-terminus: MTLQELVLRTASVYMDRTAVCFDEGNNQPPVCYSYKALLSAASELSHFLIAHCDFGGIREIGLYCQPGINLPSWILGILQVPAAYAPIDPDSPPSLSTYFMKKCDLKYVLVEKQQLSKFKSSHETVLNYDTVSVEHKDLALFRLHWEDGRVSTVLGDRADQHKVTDREDRVSAESRTPEKEHMDMRHDGCLAYVLHTSGTTGTPKIVRVPHACILPNIQHFRSLFDITQEDILFLASPLTFDPSVVEIFVSLSSGACLLIVPTSVKVLPSKLADILFSRHRVTVLQATPTLLRRFGSELIKSTVLSAHTSLRVLALGGEAFPSLTILKSWRGKGNRTQIFNIYGITEVSSWATFYRIPEEILNSAVKHESPVQLGSPLLGTVIEVRDQNGSPVLEGTGQVFLGGKNRVCFLDDEMTVPLGTMRATGDFVTVKDGEIFFLGRKDSQIKRHGKRLNIALVQQVAEELRQVESCAVTWYNQERLILFIVSKVDLVKDCIFKELQKHLPAHALPDDMVLIDTLPFTCHGKVDVSELNKIYLDYISSQPRNELHGKEELWGKLQYLWKSILCLPEDPEDTLKVPANSVFLDSGGDSLKSMRLLSEIERLTGTAIPGLLEVILSSSLLDVYNHIVQAVFTPEDRKANRSYTTKRKFSDADPEEASGKPARLESAWPSNHAGETNSVIALSRGSQVLSLGAGRLLTQLGLCLPVCSLDLIPQTNTQILKSLSPPAPDENLEKPPLFQQGSPVVGAMAMALRERWRSDTGKCVDASPLLVRAAVQDKPSTTVYIGSHSHTVKAVDLSSGETRWEQLLGDRIESSACVSKCGNFIVVGCYNGLVYVLKSNSGEKYWTFTTEDAVKSSPAVDPTTGLIYVGSHDQHAYALDIYEKKCVWKLNCEGALFSSPCVSLSPHHLYCATLGGLLLALNPASGSTVWKRSCGKPLFSSPRCYQQYICIGCVDGSLLCFTHSGEQVWRFAAGGPIFSSPCVSAAEQEIFFGSHDCFIYCCSKEGHLRWKFETTARVYATPFAFSNHPRSDDALLAAASTDGKLWVLESRSGELRSVYELPGEVFSSPVVWESMLVIGCRNNYIYCLDLLCGDKNNQV.

The disordered stretch occupies residues 162 to 181 (HKVTDREDRVSAESRTPEKE). ATP is bound by residues 197 to 205 (TSGTTGTPK), D427, R441, and K526. The Carrier domain maps to 552-632 (EELWGKLQYL…DVYNHIVQAV (81 aa)). S591 carries the O-(pantetheine 4'-phosphoryl)serine modification. The segment at 643–671 (SYTTKRKFSDADPEEASGKPARLESAWPS) is disordered. Phosphoserine is present on S651.

It belongs to the ATP-dependent AMP-binding enzyme family.

In terms of biological role, covalently binds beta-alanine in an ATP-dependent manner to form a thioester bond with its phosphopantetheine group and transfers it to an as yet unknown acceptor via an amide bond. May be required for a post-translational protein modification or for post-transcriptional modification of an RNA. The chain is Beta-alanine-activating enzyme (Aasdh) from Mus musculus (Mouse).